A 172-amino-acid chain; its full sequence is Centrin-1 (172 aa).

The disordered stretch occupies residues 1–31 (MASGFKKPSAASTGQKRKVAPKPELTEDQKQ). 4 EF-hand domains span residues 28 to 63 (DQKQ…LGFE), 64 to 99 (PRKE…KMSE), 101 to 136 (DTKE…LGEN), and 137 to 172 (LTDE…TSLY). Ca(2+) is bound by residues D41, D43, S45, T47, and E52. Residues D150, D152, D154, E156, and E161 each coordinate Ca(2+).

The protein belongs to the centrin family. In terms of assembly, monomer. Interacts with CIMAP3. Interacts with USP49.

The protein resides in the cytoplasm. Its subcellular location is the cytoskeleton. The protein localises to the microtubule organizing center. It localises to the centrosome. It is found in the cell projection. The protein resides in the cilium. In terms of biological role, plays a fundamental role in microtubule-organizing center structure and function. Plays a role in sperm cilia formation. This is Centrin-1 from Homo sapiens (Human).